Reading from the N-terminus, the 346-residue chain is Methionine import ATP-binding protein MetN 1 (346 aa).

Residues 2 to 241 form the ABC transporter domain; sequence IEFKQVTKTF…PQHPTTEKFV (240 aa). ATP is bound at residue 38 to 45; that stretch reads GFSGAGKS.

This sequence belongs to the ABC transporter superfamily. Methionine importer (TC 3.A.1.24) family. In terms of assembly, the complex is composed of two ATP-binding proteins (MetN), two transmembrane proteins (MetI) and a solute-binding protein (MetQ).

The protein resides in the cell membrane. It carries out the reaction L-methionine(out) + ATP + H2O = L-methionine(in) + ADP + phosphate + H(+). The catalysed reaction is D-methionine(out) + ATP + H2O = D-methionine(in) + ADP + phosphate + H(+). In terms of biological role, part of the ABC transporter complex MetNIQ involved in methionine import. Responsible for energy coupling to the transport system. The chain is Methionine import ATP-binding protein MetN 1 from Shouchella clausii (strain KSM-K16) (Alkalihalobacillus clausii).